The chain runs to 188 residues: Inactive cysteine S-methyltransferase OspZ (188 aa).

Belongs to the NleE/OspZ family.

The protein resides in the secreted. It is found in the host cytoplasm. It localises to the host nucleus. Inactive effector protein: in contrast to other members of the family, does not have the ability to inhibit host cell NF-kappa-B activation. Probably lacks cysteine S-methyltransferase activity due to its inability to bind S-adenosyl-L-methionine at the C-terminus. The polypeptide is Inactive cysteine S-methyltransferase OspZ (Shigella flexneri).